Reading from the N-terminus, the 985-residue chain is Phosphoenolpyruvate carboxylase (985 aa).

The span at 1 to 17 (MTQSAARRASSRATPAR) shows a compositional bias: low complexity. The interval 1 to 55 (MTQSAARRASSRATPARKTPPAPASQTPAPSPGGTAGTALGPTSRRSSGSAAAKD) is disordered. Catalysis depends on residues His193 and Lys634.

It belongs to the PEPCase type 1 family. The cofactor is Mg(2+).

The enzyme catalyses oxaloacetate + phosphate = phosphoenolpyruvate + hydrogencarbonate. Its function is as follows. Forms oxaloacetate, a four-carbon dicarboxylic acid source for the tricarboxylic acid cycle. The sequence is that of Phosphoenolpyruvate carboxylase from Ralstonia nicotianae (strain ATCC BAA-1114 / GMI1000) (Ralstonia solanacearum).